The primary structure comprises 337 residues: Inositol 2-dehydrogenase 1 (337 aa).

It belongs to the Gfo/Idh/MocA family. Homotetramer.

The enzyme catalyses myo-inositol + NAD(+) = scyllo-inosose + NADH + H(+). Functionally, involved in the oxidation of myo-inositol (MI) to 2-keto-myo-inositol (2KMI or 2-inosose). In Saccharopolyspora erythraea (strain ATCC 11635 / DSM 40517 / JCM 4748 / NBRC 13426 / NCIMB 8594 / NRRL 2338), this protein is Inositol 2-dehydrogenase 1.